We begin with the raw amino-acid sequence, 481 residues long: RAC-beta serine/threonine-protein kinase (481 aa).

At M1 the chain carries N-acetylmethionine. A PH domain is found at 5-108 (SVIKEGWLHK…WMRAIQMVAN (104 aa)). The residue at position 34 (S34) is a Phosphoserine. An intrachain disulfide couples C60 to C77. S126 is modified (phosphoserine). O-linked (GlcNAc) serine glycosylation is found at S128 and S131. The Protein kinase domain maps to 152-409 (FDYLKLLGKG…AKEVMEHRFF (258 aa)). ATP-binding positions include 158–166 (LGKGTFGKV) and K181. The active-site Proton acceptor is the D275. Mn(2+) is bound by residues N280 and D293. An intrachain disulfide couples C297 to C311. O-linked (GlcNAc) threonine glycosylation occurs at T306. Position 309 is a phosphothreonine; by PDPK1 (T309). T313 carries an O-linked (GlcNAc) threonine glycan. In terms of domain architecture, AGC-kinase C-terminal spans 410–481 (LSINWQDVVQ…QFSYSASIRE (72 aa)). S447 bears the Phosphoserine mark. T451 carries the post-translational modification Phosphothreonine. Residues S474 and S478 each carry the phosphoserine modification. S474 is a glycosylation site (O-linked (GlcNAc) serine; alternate).

The protein belongs to the protein kinase superfamily. AGC Ser/Thr protein kinase family. RAC subfamily. In terms of assembly, interacts with BTBD10. Interacts with KCTD20. Interacts (via PH domain) with MTCP1, TCL1A and TCL1B; this interaction may facilitate AKT2 oligomerization and phosphorylation, hence increasing kinase activity. Interacts with PHB2; this interaction may be important for myogenic differentiation. Interacts (when phosphorylated) with CLIP3/ClipR-59; this interaction promotes AKT2 recruitment to the plasma membrane. Interacts with WDFY2/ProF (via WD repeats 1-3). In terms of processing, phosphorylation on Thr-309 and Ser-474 is required for full activity. Phosphorylation of the activation loop at Thr-309 by PDPK1/PDK1 is a prerequisite for full activation. Phosphorylated and activated by PDPK1/PDK1 in the presence of phosphatidylinositol 3,4,5-trisphosphate. Phosphorylation by mTORC2 in response to growth factors plays a key role in AKT1 activation: mTORC2 phosphorylates different sites depending on the context, such as Ser-474 or Ser-478, thereby facilitating subsequent phosphorylation of the activation loop by PDPK1/PDK1. Post-translationally, ubiquitinated; undergoes both 'Lys-48'- and 'Lys-63'-linked polyubiquitination. TRAF6 catalyzes 'Lys-63'-linked AKT2 ubiquitination; this modification may be important for AKT2 recruitment to the plasma membrane and for AKT2 activating phosphorylation. When phosphorylated, undergoes 'Lys-48'-polyubiquitination catalyzed by TTC3 in the nucleus, leading to its degradation by the proteasome. O-GlcNAcylation at Thr-306 and Thr-313 inhibits activating phosphorylation at Thr-309 via the disruption of the interaction between AKT and PDPK1/PDK1. In terms of tissue distribution, widely expressed. Expressed in myoblasts.

It is found in the cytoplasm. The protein localises to the nucleus. It localises to the cell membrane. The protein resides in the early endosome. It catalyses the reaction L-seryl-[protein] + ATP = O-phospho-L-seryl-[protein] + ADP + H(+). The enzyme catalyses L-threonyl-[protein] + ATP = O-phospho-L-threonyl-[protein] + ADP + H(+). With respect to regulation, phosphorylation at Thr-309 (in the kinase domain) and Ser-474 (in the C-terminal regulatory region) is required for full activation. In adipocytes and hepatocytes, the activation is induced by insulin. Aminofurazans, such as 4-[2-(4-amino-2,5-dihydro-1,2,5-oxadiazol-3-yl)-6-{[(1S)-3-amino-1-phenylpropyl]oxy}-1-ethyl-1H-imidazo[4,5-c]pyridin-4-yl]-2-methylbut-3-yn-2-ol (compound 32), are potent AKT2 inhibitors. AKT2 phosphorylation of PKP1 is induced by insulin. In terms of biological role, serine/threonine kinase closely related to AKT1 and AKT3. All 3 enzymes, AKT1, AKT2 and AKT3, are collectively known as AKT kinase. AKT regulates many processes including metabolism, proliferation, cell survival, growth and angiogenesis, through the phosphorylation of a range of downstream substrates. Over 100 substrates have been reported so far, although for most of them, the precise AKT kinase catalyzing the reaction was not specified. AKT regulates glucose uptake by mediating insulin-induced translocation of the SLC2A4/GLUT4 glucose transporter to the cell surface. Phosphorylation of PTPN1 at 'Ser-50' negatively modulates its phosphatase activity preventing dephosphorylation of the insulin receptor and the attenuation of insulin signaling. Phosphorylation of TBC1D4 triggers the binding of this effector to inhibitory 14-3-3 proteins, which is required for insulin-stimulated glucose transport. AKT also regulates the storage of glucose in the form of glycogen by phosphorylating GSK3A at 'Ser-21' and GSK3B at 'Ser-9', resulting in inhibition of its kinase activity. Phosphorylation of GSK3 isoforms by AKT is also thought to be one mechanism by which cell proliferation is driven. AKT also regulates cell survival via the phosphorylation of MAP3K5 (apoptosis signal-related kinase). Phosphorylation of 'Ser-83' decreases MAP3K5 kinase activity stimulated by oxidative stress and thereby prevents apoptosis. AKT mediates insulin-stimulated protein synthesis by phosphorylating TSC2 at 'Ser-939' and 'Thr-1462', thereby activating mTORC1 signaling and leading to both phosphorylation of 4E-BP1 and in activation of RPS6KB1. AKT is involved in the phosphorylation of members of the FOXO factors (Forkhead family of transcription factors), leading to binding of 14-3-3 proteins and cytoplasmic localization. In particular, FOXO1 is phosphorylated at 'Thr-24', 'Ser-256' and 'Ser-319'. FOXO3 and FOXO4 are phosphorylated on equivalent sites. AKT has an important role in the regulation of NF-kappa-B-dependent gene transcription and positively regulates the activity of CREB1 (cyclic AMP (cAMP)-response element binding protein). The phosphorylation of CREB1 induces the binding of accessory proteins that are necessary for the transcription of pro-survival genes such as BCL2 and MCL1. AKT phosphorylates 'Ser-454' on ATP citrate lyase (ACLY), thereby potentially regulating ACLY activity and fatty acid synthesis. Activates the 3B isoform of cyclic nucleotide phosphodiesterase (PDE3B) via phosphorylation of 'Ser-273', resulting in reduced cyclic AMP levels and inhibition of lipolysis. Phosphorylates PIKFYVE on 'Ser-318', which results in increased PI(3)P-5 activity. The Rho GTPase-activating protein DLC1 is another substrate and its phosphorylation is implicated in the regulation cell proliferation and cell growth. AKT plays a role as key modulator of the AKT-mTOR signaling pathway controlling the tempo of the process of newborn neurons integration during adult neurogenesis, including correct neuron positioning, dendritic development and synapse formation. Signals downstream of phosphatidylinositol 3-kinase (PI(3)K) to mediate the effects of various growth factors such as platelet-derived growth factor (PDGF), epidermal growth factor (EGF), insulin and insulin-like growth factor 1 (IGF1). AKT mediates the antiapoptotic effects of IGF1. Essential for the SPATA13-mediated regulation of cell migration and adhesion assembly and disassembly. May be involved in the regulation of the placental development. In response to lysophosphatidic acid stimulation, inhibits the ciliogenesis cascade. In this context, phosphorylates WDR44, hence stabilizing its interaction with Rab11 and preventing the formation of the ciliogenic Rab11-FIP3-RAB3IP complex. Also phosphorylates RAB3IP/Rabin8, thus may affect RAB3IP guanine nucleotide exchange factor (GEF) activity toward Rab8, which is important for cilia growth. Phosphorylates PKP1, facilitating its interaction with YWHAG and translocation to the nucleus, ultimately resulting in a reduction in keratinocyte intercellular adhesion. Phosphorylation of PKP1 increases PKP1 protein stability, translocation to the cytoplasm away from desmosome plaques and PKP1-driven cap-dependent translation. Functionally, several AKT2-specific substrates have been identified, including ANKRD2, C2CD5, CLK2 and PITX2. May play a role in myoblast differentiation. In this context, may act through PITX2 phosphorylation. Unphosphorylated PITX2 associates with an ELAVL1/HuR-containing complex, which stabilizes CCND1 cyclin mRNA, ensuring cell proliferation. Phosphorylation by AKT2 impairs this association, leading to CCND1 mRNA destabilization and progression towards differentiation. Also involved in the negative regulation of myogenesis in response to stress conditions. In this context, acts by phosphorylating ANKRD2. May also be a key regulator of glucose uptake. Regulates insulin-stimulated glucose transport by the increase of glucose transporter GLUT4 translocation from intracellular stores to the plasma membrane. In this context, acts by phosphorylating C2CD5/CDP138 on 'Ser-197' in insulin-stimulated adipocytes. Through the phosphorylation of CLK2 on 'Thr-343', involved in insulin-regulated suppression of hepatic gluconeogenesis. The polypeptide is RAC-beta serine/threonine-protein kinase (Homo sapiens (Human)).